A 565-amino-acid chain; its full sequence is Proline--tRNA ligase (565 aa).

It belongs to the class-II aminoacyl-tRNA synthetase family. ProS type 1 subfamily. In terms of assembly, homodimer.

The protein resides in the cytoplasm. The enzyme catalyses tRNA(Pro) + L-proline + ATP = L-prolyl-tRNA(Pro) + AMP + diphosphate. Functionally, catalyzes the attachment of proline to tRNA(Pro) in a two-step reaction: proline is first activated by ATP to form Pro-AMP and then transferred to the acceptor end of tRNA(Pro). As ProRS can inadvertently accommodate and process non-cognate amino acids such as alanine and cysteine, to avoid such errors it has two additional distinct editing activities against alanine. One activity is designated as 'pretransfer' editing and involves the tRNA(Pro)-independent hydrolysis of activated Ala-AMP. The other activity is designated 'posttransfer' editing and involves deacylation of mischarged Ala-tRNA(Pro). The misacylated Cys-tRNA(Pro) is not edited by ProRS. The protein is Proline--tRNA ligase of Francisella philomiragia subsp. philomiragia (strain ATCC 25017 / CCUG 19701 / FSC 153 / O#319-036).